The following is a 903-amino-acid chain: Protein translocase subunit SecA (903 aa).

Residues Gln87, 105–109 (GEGKT), and Asp494 contribute to the ATP site. Residues 861–883 (SGSQGAAPRQPVRAEGKKVGRND) are disordered. Positions 872-881 (VRAEGKKVGR) are enriched in basic and acidic residues. Cys885, Cys887, Cys896, and Cys897 together coordinate Zn(2+).

This sequence belongs to the SecA family. As to quaternary structure, monomer and homodimer. Part of the essential Sec protein translocation apparatus which comprises SecA, SecYEG and auxiliary proteins SecDF. Other proteins may also be involved. Zn(2+) serves as cofactor.

Its subcellular location is the cell membrane. The protein resides in the cytoplasm. The catalysed reaction is ATP + H2O + cellular proteinSide 1 = ADP + phosphate + cellular proteinSide 2.. Part of the Sec protein translocase complex. Interacts with the SecYEG preprotein conducting channel. Has a central role in coupling the hydrolysis of ATP to the transfer of proteins into and across the cell membrane, serving as an ATP-driven molecular motor driving the stepwise translocation of polypeptide chains across the membrane. The protein is Protein translocase subunit SecA of Symbiobacterium thermophilum (strain DSM 24528 / JCM 14929 / IAM 14863 / T).